Consider the following 415-residue polypeptide: Serine hydroxymethyltransferase (415 aa).

Residues leucine 121 and glycine 125–leucine 127 each bind (6S)-5,6,7,8-tetrahydrofolate. Lysine 229 is subject to N6-(pyridoxal phosphate)lysine.

It belongs to the SHMT family. As to quaternary structure, homodimer. Pyridoxal 5'-phosphate is required as a cofactor.

The protein resides in the cytoplasm. It catalyses the reaction (6R)-5,10-methylene-5,6,7,8-tetrahydrofolate + glycine + H2O = (6S)-5,6,7,8-tetrahydrofolate + L-serine. The protein operates within one-carbon metabolism; tetrahydrofolate interconversion. Its pathway is amino-acid biosynthesis; glycine biosynthesis; glycine from L-serine: step 1/1. In terms of biological role, catalyzes the reversible interconversion of serine and glycine with tetrahydrofolate (THF) serving as the one-carbon carrier. This reaction serves as the major source of one-carbon groups required for the biosynthesis of purines, thymidylate, methionine, and other important biomolecules. Also exhibits THF-independent aldolase activity toward beta-hydroxyamino acids, producing glycine and aldehydes, via a retro-aldol mechanism. This chain is Serine hydroxymethyltransferase, found in Bordetella petrii (strain ATCC BAA-461 / DSM 12804 / CCUG 43448).